A 554-amino-acid chain; its full sequence is Formate--tetrahydrofolate ligase (554 aa).

Residue 65-72 (TPLGEGKT) participates in ATP binding.

Belongs to the formate--tetrahydrofolate ligase family.

The catalysed reaction is (6S)-5,6,7,8-tetrahydrofolate + formate + ATP = (6R)-10-formyltetrahydrofolate + ADP + phosphate. The protein operates within one-carbon metabolism; tetrahydrofolate interconversion. The chain is Formate--tetrahydrofolate ligase from Aliivibrio salmonicida (strain LFI1238) (Vibrio salmonicida (strain LFI1238)).